We begin with the raw amino-acid sequence, 257 residues long: UPF0246 protein PC1_3665 (257 aa).

This sequence belongs to the UPF0246 family.

In Pectobacterium carotovorum subsp. carotovorum (strain PC1), this protein is UPF0246 protein PC1_3665.